Reading from the N-terminus, the 282-residue chain is Shikimate dehydrogenase (NADP(+)) (282 aa).

Shikimate-binding positions include serine 18–serine 20 and threonine 65. The Proton acceptor role is filled by lysine 69. Residues asparagine 90 and aspartate 106 each coordinate shikimate. Residues glycine 134 to alanine 138, asparagine 158 to arginine 163, and isoleucine 223 each bind NADP(+). Tyrosine 225 is a binding site for shikimate. Residue glycine 246 participates in NADP(+) binding.

This sequence belongs to the shikimate dehydrogenase family. Homodimer.

The catalysed reaction is shikimate + NADP(+) = 3-dehydroshikimate + NADPH + H(+). It functions in the pathway metabolic intermediate biosynthesis; chorismate biosynthesis; chorismate from D-erythrose 4-phosphate and phosphoenolpyruvate: step 4/7. Functionally, involved in the biosynthesis of the chorismate, which leads to the biosynthesis of aromatic amino acids. Catalyzes the reversible NADPH linked reduction of 3-dehydroshikimate (DHSA) to yield shikimate (SA). In Methylobacterium radiotolerans (strain ATCC 27329 / DSM 1819 / JCM 2831 / NBRC 15690 / NCIMB 10815 / 0-1), this protein is Shikimate dehydrogenase (NADP(+)).